We begin with the raw amino-acid sequence, 363 residues long: UDP-3-O-acylglucosamine N-acyltransferase (363 aa).

His239 serves as the catalytic Proton acceptor. Residues 342-363 are disordered; the sequence is LSEMKKEVEKEKESSREKEETK.

The protein belongs to the transferase hexapeptide repeat family. LpxD subfamily. As to quaternary structure, homotrimer.

The enzyme catalyses a UDP-3-O-[(3R)-3-hydroxyacyl]-alpha-D-glucosamine + a (3R)-hydroxyacyl-[ACP] = a UDP-2-N,3-O-bis[(3R)-3-hydroxyacyl]-alpha-D-glucosamine + holo-[ACP] + H(+). The protein operates within bacterial outer membrane biogenesis; LPS lipid A biosynthesis. Functionally, catalyzes the N-acylation of UDP-3-O-acylglucosamine using 3-hydroxyacyl-ACP as the acyl donor. Is involved in the biosynthesis of lipid A, a phosphorylated glycolipid that anchors the lipopolysaccharide to the outer membrane of the cell. The protein is UDP-3-O-acylglucosamine N-acyltransferase of Syntrophus aciditrophicus (strain SB).